Reading from the N-terminus, the 59-residue chain is Large ribosomal subunit protein bL32 (59 aa).

Disordered regions lie at residues 1-23 (MAVQ…DFLT) and 35-59 (EVHL…TKND). Basic residues predominate over residues 49–59 (RGKKVVKTKND).

This sequence belongs to the bacterial ribosomal protein bL32 family.

This is Large ribosomal subunit protein bL32 from Burkholderia ambifaria (strain MC40-6).